The sequence spans 195 residues: MYLINQNGWIEVICGSMFSGKSEELIRRVRRTQFAKQHAIVFKPCIDNRYSEEDVVSHNGLKVKAVPVSASKDIFEHITEEMDVIAIDEVQFFDGDIVEVVQVLANRGYRVIVAGLDQDFRGLPFGQVPQLMAIAEHVTKLQAVCSACGSPASRTQRLIDGEPAAFDDPIILVGASESYEPRCRHCHVVPTNKDK.

ATP contacts are provided by residues 15–22 (GSMFSGKS) and 88–91 (DEVQ). Glutamate 89 acts as the Proton acceptor in catalysis. Zn(2+) contacts are provided by cysteine 145, cysteine 148, cysteine 183, and cysteine 186.

The protein belongs to the thymidine kinase family. Homotetramer.

It localises to the cytoplasm. The catalysed reaction is thymidine + ATP = dTMP + ADP + H(+). The sequence is that of Thymidine kinase from Bacillus cereus (strain 03BB102).